The chain runs to 422 residues: Protein krasavietz (422 aa).

The tract at residues 1 to 26 (MSQKTERPVLSGQRIKTRKRDEREKY) is disordered. The region spanning 244–415 (KLHKAQASQE…QSAEEESESE (172 aa)) is the W2 domain. 3 positions are modified to phosphoserine: S407, S412, and S414.

It belongs to the BZW family. In terms of tissue distribution, expressed in mushroom bodies.

In terms of biological role, may be involved in memory formation. This Drosophila melanogaster (Fruit fly) protein is Protein krasavietz (kra).